A 287-amino-acid polypeptide reads, in one-letter code: ATP synthase gamma chain (287 aa).

Belongs to the ATPase gamma chain family. F-type ATPases have 2 components, CF(1) - the catalytic core - and CF(0) - the membrane proton channel. CF(1) has five subunits: alpha(3), beta(3), gamma(1), delta(1), epsilon(1). CF(0) has three main subunits: a, b and c.

The protein resides in the cell inner membrane. Its function is as follows. Produces ATP from ADP in the presence of a proton gradient across the membrane. The gamma chain is believed to be important in regulating ATPase activity and the flow of protons through the CF(0) complex. The chain is ATP synthase gamma chain from Yersinia pestis.